Reading from the N-terminus, the 616-residue chain is MPPYRSRTTTHGRNMAGARGLWRATGMKDGDFGKPIIAVANSFTQFVPGHVHLKDLGQLVAREIEAAGGVAKEFNTIAVDDGIAMGHDGMLYSLPSREIIADSVEYMVNAHCADAIVCISNCDKITPGMLMASLRLNIPVVFVSGGPMEAGKVLLGGKTKALDLVDAMVAAADDKVSEADVAAIERSACPTCGSCSGMFTANSMNCLTEALGLALPGNGSMLATHGDRKRLFVEAGHLIVDLARRYYEQDDSSVLPRSIASFAAFENAMTLDISMGGSTNTVLHLLAAAHEGEIDFTMADIDRLSRRVPVLCKVAPAVADVHVEDVHRAGGVMAILGELERAGLIHGDLPVVHAPSLKEALERWDLRRTSSESVTEFFRAAPGGVPTQVAFSQNARWKETDVDRAGGVIRDVEHAFSKDGGLAVLYGNLAEDGAIVKTAGVDASILVFSGPARVFESQDAAVEAILANQIKPGDVLVIRYEGPRGGPGMQEMLYPTSYLKSKGLGKACALITDGRFSGGTSGLSIGHVSPEAAEGGLIGLVEEGDSIQIDIPNRRLHLDISDEALAHRRTAMAEKGKGAWKPAHRTRKVSTALRAYAAMATSAARGAVRDVDQLFH.

D81 contacts Mg(2+). C122 is a [2Fe-2S] cluster binding site. Residues D123 and K124 each contribute to the Mg(2+) site. Residue K124 is modified to N6-carboxylysine. [2Fe-2S] cluster is bound at residue C195. E491 is a binding site for Mg(2+). S517 serves as the catalytic Proton acceptor.

It belongs to the IlvD/Edd family. In terms of assembly, homodimer. [2Fe-2S] cluster serves as cofactor. Mg(2+) is required as a cofactor.

The catalysed reaction is (2R)-2,3-dihydroxy-3-methylbutanoate = 3-methyl-2-oxobutanoate + H2O. The enzyme catalyses (2R,3R)-2,3-dihydroxy-3-methylpentanoate = (S)-3-methyl-2-oxopentanoate + H2O. Its pathway is amino-acid biosynthesis; L-isoleucine biosynthesis; L-isoleucine from 2-oxobutanoate: step 3/4. The protein operates within amino-acid biosynthesis; L-valine biosynthesis; L-valine from pyruvate: step 3/4. Functionally, functions in the biosynthesis of branched-chain amino acids. Catalyzes the dehydration of (2R,3R)-2,3-dihydroxy-3-methylpentanoate (2,3-dihydroxy-3-methylvalerate) into 2-oxo-3-methylpentanoate (2-oxo-3-methylvalerate) and of (2R)-2,3-dihydroxy-3-methylbutanoate (2,3-dihydroxyisovalerate) into 2-oxo-3-methylbutanoate (2-oxoisovalerate), the penultimate precursor to L-isoleucine and L-valine, respectively. This Methylocella silvestris (strain DSM 15510 / CIP 108128 / LMG 27833 / NCIMB 13906 / BL2) protein is Dihydroxy-acid dehydratase.